Here is a 547-residue protein sequence, read N- to C-terminus: Phosphomethylpyrimidine synthase (547 aa).

Residues 1–15 (MTETLSKTTEPSVTT) are compositionally biased toward polar residues. Residues 1 to 36 (MTETLSKTTEPSVTTGPIPGSSKAYREVANPDGGPS) are disordered. Residues N150, M179, Y208, H244, 264–266 (SRG), 305–308 (DGLR), and E344 contribute to the substrate site. H348 lines the Zn(2+) pocket. Substrate is bound at residue Y371. Residue H412 participates in Zn(2+) binding. Residues C492, C495, and C500 each contribute to the [4Fe-4S] cluster site.

It belongs to the ThiC family. Requires [4Fe-4S] cluster as cofactor.

It carries out the reaction 5-amino-1-(5-phospho-beta-D-ribosyl)imidazole + S-adenosyl-L-methionine = 4-amino-2-methyl-5-(phosphooxymethyl)pyrimidine + CO + 5'-deoxyadenosine + formate + L-methionine + 3 H(+). The protein operates within cofactor biosynthesis; thiamine diphosphate biosynthesis. In terms of biological role, catalyzes the synthesis of the hydroxymethylpyrimidine phosphate (HMP-P) moiety of thiamine from aminoimidazole ribotide (AIR) in a radical S-adenosyl-L-methionine (SAM)-dependent reaction. In Mycobacterium leprae (strain Br4923), this protein is Phosphomethylpyrimidine synthase.